Reading from the N-terminus, the 368-residue chain is D-alanine--D-alanine ligase (368 aa).

The ATP-grasp domain maps to 141–350 (KMIWDYSGLP…YNELIMHLIE (210 aa)). 176–231 (EKDLEYPLFIKPCRAGSSVGAGMVKNRNELLEQAEESFLWDNKILVEACIEAREVE) contributes to the ATP binding site. The Mg(2+) site is built by Asp-303, Glu-317, and Asn-319.

The protein belongs to the D-alanine--D-alanine ligase family. It depends on Mg(2+) as a cofactor. Requires Mn(2+) as cofactor.

The protein resides in the cytoplasm. It catalyses the reaction 2 D-alanine + ATP = D-alanyl-D-alanine + ADP + phosphate + H(+). It participates in cell wall biogenesis; peptidoglycan biosynthesis. Its function is as follows. Cell wall formation. The chain is D-alanine--D-alanine ligase from Treponema denticola (strain ATCC 35405 / DSM 14222 / CIP 103919 / JCM 8153 / KCTC 15104).